The primary structure comprises 167 residues: RNA pyrophosphohydrolase (167 aa).

A Nudix hydrolase domain is found at 8–158 (PYRRNVGAML…KRDIYRTLVR (151 aa)). Positions 49-70 (GGIDADEDPEEAVLRELREEIG) match the Nudix box motif.

It belongs to the Nudix hydrolase family. RppH subfamily. A divalent metal cation serves as cofactor.

In terms of biological role, accelerates the degradation of transcripts by removing pyrophosphate from the 5'-end of triphosphorylated RNA, leading to a more labile monophosphorylated state that can stimulate subsequent ribonuclease cleavage. The protein is RNA pyrophosphohydrolase of Gluconacetobacter diazotrophicus (strain ATCC 49037 / DSM 5601 / CCUG 37298 / CIP 103539 / LMG 7603 / PAl5).